The sequence spans 1155 residues: DNA-directed RNA polymerase subunit beta (1155 aa).

Belongs to the RNA polymerase beta chain family. The RNAP catalytic core consists of 2 alpha, 1 beta, 1 beta' and 1 omega subunit. When a sigma factor is associated with the core the holoenzyme is formed, which can initiate transcription.

It catalyses the reaction RNA(n) + a ribonucleoside 5'-triphosphate = RNA(n+1) + diphosphate. Its function is as follows. DNA-dependent RNA polymerase catalyzes the transcription of DNA into RNA using the four ribonucleoside triphosphates as substrates. This is DNA-directed RNA polymerase subunit beta from Borreliella burgdorferi (strain ZS7) (Borrelia burgdorferi).